The following is a 173-amino-acid chain: Transcription factor HES-2 (173 aa).

A bHLH domain is found at 13–70 (LRKSLKPLLEKRRRARINQSLSQLKGLILPLLGRENSNCSKLEKADVLEMTVRFLQEL). Positions 86–119 (YREGYSACVARLARVLPACRVLEPAVSARLLEHL) constitute an Orange domain. Residues 128–173 (LDGGRAGDSSGPSAPAPAPASAPEPASAPVPSPPSPPCGPGLWRPW) are disordered. Residues 141-166 (APAPAPASAPEPASAPVPSPPSPPCG) are compositionally biased toward pro residues. Residues 170–173 (WRPW) carry the WRPW motif motif.

In terms of assembly, transcription repression requires formation of a complex with a corepressor protein of the Groucho/TLE family. As to expression, expressed in placenta, pancreatic cancer, colon cancer with RER, cervical cancer, and in head and neck tumors.

It is found in the nucleus. In terms of biological role, transcriptional repressor of genes that require a bHLH protein for their transcription. The sequence is that of Transcription factor HES-2 (HES2) from Homo sapiens (Human).